Here is a 640-residue protein sequence, read N- to C-terminus: Calpain-5 (640 aa).

The 318-residue stretch at 26–343 (LFEDPHFPAS…FTDIIKCRLI (318 aa)) folds into the Calpain catalytic domain. Catalysis depends on residues Cys81, His252, and Asn284. The interval 344–496 (NTSYLSIHKT…VFTDVPSNCR (153 aa)) is domain III. Residues 499 to 617 (RLDEPPRTCW…HSLHLQDRSG (119 aa)) form the C2 domain.

This sequence belongs to the peptidase C2 family.

Calcium-regulated non-lysosomal thiol-protease. In Rattus norvegicus (Rat), this protein is Calpain-5 (Capn5).